Reading from the N-terminus, the 201-residue chain is MTESESAAVPVDAAAYREAMSRLASAVHLITTDGPGGRAGFTASAVCSVSDAPPTLLVCINRTSSAYAALTQNGTLCVNTLGEGHETVAGLFGGRTPVDERFAAGTWRRLRSGALALTDALVSFDCRIVGRHAVGSHDVLYCAVEAVAASGQADALLYSERRYRTLPRAPRSGAAPAEPARAARALGARPAEGPALALRSA.

Residues 169-201 form a disordered region; that stretch reads APRSGAAPAEPARAARALGARPAEGPALALRSA.

It belongs to the non-flavoprotein flavin reductase family. RutF subfamily.

It catalyses the reaction FMNH2 + NAD(+) = FMN + NADH + 2 H(+). Functionally, catalyzes the reduction of FMN to FMNH2 which is used to reduce pyrimidine by RutA via the Rut pathway. In Methylorubrum extorquens (strain ATCC 14718 / DSM 1338 / JCM 2805 / NCIMB 9133 / AM1) (Methylobacterium extorquens), this protein is FMN reductase (NADH) RutF.